We begin with the raw amino-acid sequence, 422 residues long: Beta-1,3-galactosyltransferase 2 (422 aa).

The Cytoplasmic portion of the chain corresponds to 1-24 (MLQWRRRHCCFAKMTWNAKRSLFR). The helical; Signal-anchor for type II membrane protein transmembrane segment at 25 to 45 (THLIGVLSLVFLFAMFLFFNH) threads the bilayer. Topologically, residues 46-422 (HDWLPGRAGF…AGRYRHRKLH (377 aa)) are lumenal. 5 N-linked (GlcNAc...) asparagine glycosylation sites follow: Asn-75, Asn-100, Asn-119, Asn-176, and Asn-226. The disordered stretch occupies residues 90 to 110 (TLRPQTATNSNNTDLSPQGVT).

This sequence belongs to the glycosyltransferase 31 family. Mn(2+) is required as a cofactor. As to expression, detected in heart and brain.

Its subcellular location is the golgi apparatus membrane. The enzyme catalyses an N-acetyl-beta-D-glucosaminyl derivative + UDP-alpha-D-galactose = a beta-D-galactosyl-(1-&gt;3)-N-acetyl-beta-D-glucosaminyl derivative + UDP + H(+). The catalysed reaction is a beta-D-GlcNAc-(1-&gt;3)-beta-D-Gal-(1-&gt;4)-beta-D-Glc-(1&lt;-&gt;1)-Cer(d18:1(4E)) + UDP-alpha-D-galactose = a beta-D-Gal-(1-&gt;3)-beta-D-GlcNAc-(1-&gt;3)-beta-D-Gal-(1-&gt;4)-beta-D-Glc-(1&lt;-&gt;1')-Cer(d18:1(4E)) + UDP + H(+). It carries out the reaction a neolactoside IV(3)-beta-GlcNAc-nLc4Cer(d18:1(4E)) + UDP-alpha-D-galactose = a neolactoside IV(3)-beta-[Gal-beta-(1-&gt;3)-GlcNAc]-nLc4Cer(d18:1(4E)) + UDP + H(+). Its pathway is protein modification; protein glycosylation. In terms of biological role, beta-1,3-galactosyltransferase that transfers galactose from UDP-galactose to substrates with a terminal beta-N-acetylglucosamine (beta-GlcNAc) residue. Can also utilize substrates with a terminal galactose residue, albeit with lower efficiency. Involved in the biosynthesis of the carbohydrate moieties of glycolipids and glycoproteins. Inactive towards substrates with terminal alpha-N-acetylglucosamine (alpha-GlcNAc) or alpha-N-acetylgalactosamine (alpha-GalNAc) residues. The chain is Beta-1,3-galactosyltransferase 2 from Homo sapiens (Human).